We begin with the raw amino-acid sequence, 496 residues long: Lysine--tRNA ligase (496 aa).

Mg(2+) contacts are provided by E409 and E416.

It belongs to the class-II aminoacyl-tRNA synthetase family. As to quaternary structure, homodimer. Requires Mg(2+) as cofactor.

It localises to the cytoplasm. It carries out the reaction tRNA(Lys) + L-lysine + ATP = L-lysyl-tRNA(Lys) + AMP + diphosphate. The polypeptide is Lysine--tRNA ligase (Streptococcus sanguinis (strain SK36)).